Here is an 858-residue protein sequence, read N- to C-terminus: Bifunctional uridylyltransferase/uridylyl-removing enzyme (858 aa).

A uridylyltransferase region spans residues 1-324 (MSASVAEPPP…PATSGVTRVL (324 aa)). A uridylyl-removing region spans residues 325 to 681 (SPGRFVEKQG…ARPSPVGDAL (357 aa)). The region spanning 443–565 (VDQHILMVLR…VGSERRLTAL (123 aa)) is the HD domain. ACT domains follow at residues 682–761 (QVLV…PEPS) and 790–858 (ILSV…AIAV).

The protein belongs to the GlnD family. Requires Mg(2+) as cofactor.

It catalyses the reaction [protein-PII]-L-tyrosine + UTP = [protein-PII]-uridylyl-L-tyrosine + diphosphate. The enzyme catalyses [protein-PII]-uridylyl-L-tyrosine + H2O = [protein-PII]-L-tyrosine + UMP + H(+). With respect to regulation, uridylyltransferase (UTase) activity is inhibited by glutamine, while glutamine activates uridylyl-removing (UR) activity. In terms of biological role, modifies, by uridylylation and deuridylylation, the PII regulatory proteins (GlnB and homologs), in response to the nitrogen status of the cell that GlnD senses through the glutamine level. Under low glutamine levels, catalyzes the conversion of the PII proteins and UTP to PII-UMP and PPi, while under higher glutamine levels, GlnD hydrolyzes PII-UMP to PII and UMP (deuridylylation). Thus, controls uridylylation state and activity of the PII proteins, and plays an important role in the regulation of nitrogen assimilation and metabolism. This Burkholderia pseudomallei (strain K96243) protein is Bifunctional uridylyltransferase/uridylyl-removing enzyme.